The sequence spans 155 residues: MKYKFRNVVLGGTFDTLHSGHVKLLATATLIGDRILIGLTSDSFASTYKQYKVRPFSVRLANLRNLMSLIAPEREVAYVEIHDPYGPAVFDPRLEAIVASIETAPRALQINDERAKRGLRPMEVFIISTVRDGYGHTLSSTYIRRVLERPESKQS.

It belongs to the eukaryotic CoaD family.

It is found in the cytoplasm. The catalysed reaction is (R)-4'-phosphopantetheine + ATP + H(+) = 3'-dephospho-CoA + diphosphate. Its pathway is cofactor biosynthesis; coenzyme A biosynthesis. Functionally, reversibly transfers an adenylyl group from ATP to 4'-phosphopantetheine, yielding dephospho-CoA (dPCoA) and pyrophosphate. In Pyrobaculum aerophilum (strain ATCC 51768 / DSM 7523 / JCM 9630 / CIP 104966 / NBRC 100827 / IM2), this protein is Phosphopantetheine adenylyltransferase.